An 880-amino-acid chain; its full sequence is Interference hedgehog (880 aa).

Residues 1 to 20 (MTLLTSSLLLFSLLTSRLEA) form the signal peptide. Residues 21–703 (IPVLEKSPAH…ETFNMSPMLT (683 aa)) lie on the Extracellular side of the membrane. 4 Ig-like C2-type domains span residues 45 to 142 (PGVR…TARL), 155 to 232 (PESP…ERIQ), 252 to 340 (PHLL…YIKV), and 346 to 432 (PQIV…LQVN). 4 cysteine pairs are disulfide-bonded: C68-C126, C173-C220, C276-C324, and C367-C414. Residues N102 and N209 are each glycosylated (N-linked (GlcNAc...) asparagine). A disordered region spans residues 429–467 (LQVNPKQIQEPRESGGTHRPNPNQGSKHKQMYPPTPPNV). 2 Fibronectin type-III domains span residues 461 to 567 (PPTP…LQPG) and 575 to 670 (VPEL…TQRP). Residue N466 is glycosylated (N-linked (GlcNAc...) asparagine). Heparin is bound by residues R497, K501, K503, and R541. The N-linked (GlcNAc...) asparagine glycan is linked to N557. Residues 662 to 692 (LKQGRTQRPKTSTTEEPTLQMGDRDTTTPSH) are disordered. The span at 665–678 (GRTQRPKTSTTEEP) shows a compositional bias: polar residues. An N-linked (GlcNAc...) asparagine glycan is attached at N693. A helical membrane pass occupies residues 704 to 724 (GTIGGGAVLILLLISTCLCVC). Over 725 to 880 (RRRNSRSRGN…SSGSLNSVGV (156 aa)) the chain is Cytoplasmic. Disordered regions lie at residues 728 to 762 (NSRS…QRQR) and 775 to 880 (QQQQ…SVGV). Low complexity-rich tracts occupy residues 823 to 837 (RAGG…NNNN) and 864 to 880 (SSRS…SVGV).

It belongs to the immunoglobulin superfamily. IHOG family. As to quaternary structure, homodimer. Heterotetramer; 2 iHog chains bind 2 hh chains when facilitated by heparin, heparin is required to promote high-affinity interactions between hh and iHog.

The protein resides in the membrane. Its function is as follows. Mediates response to the active Hedgehog (Hh) protein signal in embryos, functioning upstream or at the level of patched (ptc). The chain is Interference hedgehog from Drosophila simulans (Fruit fly).